The primary structure comprises 298 residues: Elongation factor Ts (298 aa).

Positions 80–83 are involved in Mg(2+) ion dislocation from EF-Tu; it reads TDFV.

The protein belongs to the EF-Ts family.

It is found in the cytoplasm. Functionally, associates with the EF-Tu.GDP complex and induces the exchange of GDP to GTP. It remains bound to the aminoacyl-tRNA.EF-Tu.GTP complex up to the GTP hydrolysis stage on the ribosome. In Acidovorax sp. (strain JS42), this protein is Elongation factor Ts.